Consider the following 705-residue polypeptide: Calpastatin (705 aa).

Disordered stretches follow at residues 1-211 (MNPT…PNDA) and 226-493 (LTTC…PLPP). Composition is skewed to basic and acidic residues over residues 7 to 17 (KAVKTEPEKKP) and 24 to 62 (VVHE…EKAV). A Glycyl lysine isopeptide (Lys-Gly) (interchain with G-Cter in SUMO2) cross-link involves residue Lys-10. An N6-acetyllysine modification is found at Lys-28. Composition is skewed to low complexity over residues 63-72 (SKSSEQPPSE) and 94-103 (PAAAAAASAE). Position 65 is a phosphoserine (Ser-65). Thr-115 is modified (phosphothreonine). The span at 135–151 (TALDDLIDTLGEPEEMK) shows a compositional bias: acidic residues. Residues 149 to 202 (EMKEDNTTYTGPEVSDPMSSTYIEELGKRESTPPPKYKELLNKEEGIAGPPPDS) form an Inhibitory domain 1 repeat. Residues 173 to 194 (ELGKRESTPPPKYKELLNKEEG) are compositionally biased toward basic and acidic residues. Ser-202 and Ser-230 each carry phosphoserine. Residues 234 to 248 (DGKETEKEKSTEEAL) show a composition bias toward basic and acidic residues. Positions 275 to 286 (TEQALQALSASL) are enriched in polar residues. 2 stretches are compositionally biased toward basic and acidic residues: residues 289 to 317 (RKPE…KKCG) and 327 to 352 (YRLK…KPLS). Residues 292 to 344 (EPELDPSSIREVDEAKAKEEKVKKCGEDEETVPSEYRLKPATDKDGKPLLPEA) form an Inhibitory domain 2 repeat. Residues Ser-352, Ser-354, and Ser-361 each carry the phosphoserine modification. Acidic residues predominate over residues 355-364 (ELIDELSEDF). The segment covering 365–381 (DQSKPTEKQSKPTEKTE) has biased composition (basic and acidic residues). Position 428 is a phosphoserine (Ser-428). The span at 430 to 489 (PKKEADPEDGKPVEDKVKEKAKEEDRENFGEKEETIPPDYRLEEAKDKDGKPLLPKEVKE) shows a compositional bias: basic and acidic residues. The Inhibitory domain 3 repeat unit spans residues 434–487 (ADPEDGKPVEDKVKEKAKEEDRENFGEKEETIPPDYRLEEAKDKDGKPLLPKEV). A phosphoserine mark is found at Ser-504 and Ser-515. The segment at 527–705 (VSEVVSQTPA…KPKADGKSTS (179 aa)) is disordered. Residues 533–542 (QTPAPTTQAA) show a composition bias toward low complexity. Ser-563 bears the Phosphoserine mark. The stretch at 571–624 (PDPDENKPVEDKVKEKAKAEHRDKLGERDDTIPPKYQHLLDDNKEGTPGKPKDQ) is one Inhibitory domain 4 repeat. Positions 571–625 (PDPDENKPVEDKVKEKAKAEHRDKLGERDDTIPPKYQHLLDDNKEGTPGKPKDQR) are enriched in basic and acidic residues. Residues 651–662 (DSCPSTTETSTD) are compositionally biased toward low complexity. Residues 683–705 (KAKDSTKAKEETSKPKADGKSTS) show a composition bias toward basic and acidic residues.

It belongs to the protease inhibitor I27 (calpastatin) family.

Its function is as follows. Specific inhibition of calpain (calcium-dependent cysteine protease). Plays a key role in postmortem tenderization of meat and have been proposed to be involved in muscle protein degradation in living tissue. The protein is Calpastatin (CAST) of Bos taurus (Bovine).